Consider the following 375-residue polypeptide: Isopentenyl-diphosphate delta-isomerase (375 aa).

8 to 9 serves as a coordination point for substrate; the sequence is RK. FMN is bound by residues threonine 65, 66–68, serine 96, and asparagine 125; that span reads GMT. 96 to 98 provides a ligand contact to substrate; the sequence is SQR. Glutamine 160 serves as a coordination point for substrate. Glutamate 161 contributes to the Mg(2+) binding site. FMN contacts are provided by residues lysine 192, threonine 222, 273-275, and 294-295; these read GVR and AL.

The protein belongs to the IPP isomerase type 2 family. As to quaternary structure, homooctamer. Dimer of tetramers. FMN serves as cofactor. It depends on NADPH as a cofactor. Requires Mg(2+) as cofactor.

Its subcellular location is the cytoplasm. The enzyme catalyses isopentenyl diphosphate = dimethylallyl diphosphate. In terms of biological role, involved in the biosynthesis of isoprenoids. Catalyzes the 1,3-allylic rearrangement of the homoallylic substrate isopentenyl (IPP) to its allylic isomer, dimethylallyl diphosphate (DMAPP). This Aeropyrum pernix (strain ATCC 700893 / DSM 11879 / JCM 9820 / NBRC 100138 / K1) protein is Isopentenyl-diphosphate delta-isomerase.